Consider the following 174-residue polypeptide: Peptide deformylase (174 aa).

Residues cysteine 96 and histidine 138 each contribute to the Fe cation site. The active site involves glutamate 139. Histidine 142 contributes to the Fe cation binding site.

The protein belongs to the polypeptide deformylase family. It depends on Fe(2+) as a cofactor.

It catalyses the reaction N-terminal N-formyl-L-methionyl-[peptide] + H2O = N-terminal L-methionyl-[peptide] + formate. In terms of biological role, removes the formyl group from the N-terminal Met of newly synthesized proteins. Requires at least a dipeptide for an efficient rate of reaction. N-terminal L-methionine is a prerequisite for activity but the enzyme has broad specificity at other positions. The polypeptide is Peptide deformylase (Helicobacter pylori (strain G27)).